We begin with the raw amino-acid sequence, 243 residues long: Hydroxyacylglutathione hydrolase (243 aa).

Zn(2+) is bound by residues histidine 52, histidine 54, aspartate 56, histidine 57, histidine 108, aspartate 125, and histidine 163.

This sequence belongs to the metallo-beta-lactamase superfamily. Glyoxalase II family. Monomer. The cofactor is Zn(2+).

The catalysed reaction is an S-(2-hydroxyacyl)glutathione + H2O = a 2-hydroxy carboxylate + glutathione + H(+). It participates in secondary metabolite metabolism; methylglyoxal degradation; (R)-lactate from methylglyoxal: step 2/2. Thiolesterase that catalyzes the hydrolysis of S-D-lactoyl-glutathione to form glutathione and D-lactic acid. This chain is Hydroxyacylglutathione hydrolase, found in Haemophilus influenzae (strain PittGG).